Here is a 287-residue protein sequence, read N- to C-terminus: 4-diphosphocytidyl-2-C-methyl-D-erythritol kinase (287 aa).

Residue K14 is part of the active site. 98–108 (PPGAGLGGGSS) is an ATP binding site. Residue D140 is part of the active site.

Belongs to the GHMP kinase family. IspE subfamily.

It catalyses the reaction 4-CDP-2-C-methyl-D-erythritol + ATP = 4-CDP-2-C-methyl-D-erythritol 2-phosphate + ADP + H(+). The protein operates within isoprenoid biosynthesis; isopentenyl diphosphate biosynthesis via DXP pathway; isopentenyl diphosphate from 1-deoxy-D-xylulose 5-phosphate: step 3/6. Its function is as follows. Catalyzes the phosphorylation of the position 2 hydroxy group of 4-diphosphocytidyl-2C-methyl-D-erythritol. This is 4-diphosphocytidyl-2-C-methyl-D-erythritol kinase from Methylacidiphilum infernorum (isolate V4) (Methylokorus infernorum (strain V4)).